Consider the following 300-residue polypeptide: Estradiol 17-beta-dehydrogenase 11 (300 aa).

The N-terminal stretch at 1–18 (MKILLDLLLLLPLLIVCC) is a signal peptide. 40-67 (LITGAGHGIGRLTAYEFAKLKSKLVLWD) lines the NADP(+) pocket. Ser-172 lines the substrate pocket. The active-site Proton acceptor is Tyr-185. Lys-189 serves as a coordination point for NADP(+).

The protein belongs to the short-chain dehydrogenases/reductases (SDR) family. 17-beta-HSD 3 subfamily.

It localises to the endoplasmic reticulum. Its subcellular location is the lipid droplet. The catalysed reaction is 17beta-estradiol + NAD(+) = estrone + NADH + H(+). The enzyme catalyses 17beta-estradiol + NADP(+) = estrone + NADPH + H(+). Functionally, can convert androstan-3-alpha,17-beta-diol (3-alpha-diol) to androsterone in vitro, suggesting that it may participate in androgen metabolism during steroidogenesis. May act by metabolizing compounds that stimulate steroid synthesis and/or by generating metabolites that inhibit it. Has no activity toward DHEA (dehydroepiandrosterone), or A-dione (4-androste-3,17-dione), and only a slight activity toward testosterone to A-dione. The protein is Estradiol 17-beta-dehydrogenase 11 (HSD17B11) of Macaca fascicularis (Crab-eating macaque).